The primary structure comprises 143 residues: MSRLPVLLLLHLLVSPGLQAPMTQTTSLKTSWAKCSNMIDEIITHLNQPPLPSPDFNNLNEEDQTILVEKNLRRSNLEAFSKAVKSLQNASAIESILKNLPPCLPMATAAPTRPPIRITNGDRNDFRRKLKFYLKTLENEQAQ.

Residues 1-19 (MSRLPVLLLLHLLVSPGLQ) form the signal peptide. A disulfide bridge connects residues Cys-35 and Cys-103. N-linked (GlcNAc...) asparagine glycosylation is present at Asn-89.

Belongs to the IL-3 family. In terms of assembly, monomer. In terms of tissue distribution, activated T-cells, mast cells, natural killer cells.

It localises to the secreted. Its function is as follows. Granulocyte/macrophage colony-stimulating factors are cytokines that act in hematopoiesis by controlling the production, differentiation, and function of 2 related white cell populations of the blood, the granulocytes and the monocytes-macrophages. This CSF induces granulocytes, macrophages, mast cells, stem cells, erythroid cells, eosinophils and megakaryocytes. In Macaca mulatta (Rhesus macaque), this protein is Interleukin-3 (IL3).